We begin with the raw amino-acid sequence, 264 residues long: Electron transfer flavoprotein subunit beta (264 aa).

AMP contacts are provided by residues alanine 6, 36 to 39 (NEWD), valine 64, 119 to 122 (GVQS), and 127 to 130 (YAST).

Heterodimer of an alpha and a beta subunit. Forms a ternary complex with trimethylamine dehydrogenase.

Heterodimeric electron transfer flavoprotein that accepts electrons from trimethylamine dehydrogenase. It transfers the electrons to the main respiratory chain via ETF-ubiquinone oxidoreductase (ETF dehydrogenase). EtfB binds an AMP molecule that probably has a purely structural role. This chain is Electron transfer flavoprotein subunit beta (etfB), found in Methylophilus methylotrophus (Bacterium W3A1).